We begin with the raw amino-acid sequence, 230 residues long: Protein FAM3A (230 aa).

The N-terminal stretch at 1–33 (MRLAGPLRIVALIIIMGLTWILVTILLGGPGVG) is a signal peptide. 2 cysteine pairs are disulfide-bonded: Cys59-Cys87 and Cys65-Cys222. Positions 68–226 (EHLSFRIVSG…LEMEGCIPRR (159 aa)) constitute a GG-type lectin domain.

Belongs to the FAM3 family.

The protein localises to the secreted. The sequence is that of Protein FAM3A (Fam3a) from Mus musculus (Mouse).